The primary structure comprises 115 residues: MEDRIKISILMDYYRELLTEKQKYVMELYFNQDLSLAEISELTNTSRQAIYDIIKRCNKLLVDYEKKLNLARKNKELIKAKQIIIEKINDLEYSNNKNDFKNSLEDIKNTIVQYI.

It belongs to the UPF0122 family.

Its function is as follows. Might take part in the signal recognition particle (SRP) pathway. This is inferred from the conservation of its genetic proximity to ftsY/ffh. May be a regulatory protein. The chain is UPF0122 protein NT01CX_2214 from Clostridium novyi (strain NT).